The chain runs to 484 residues: Siroheme synthase 1 (484 aa).

Residues 1–205 (MHHYPIFLKL…GREAEGEAEL (205 aa)) are precorrin-2 dehydrogenase /sirohydrochlorin ferrochelatase. Residues 22-23 (EA) and 43-44 (PV) contribute to the NAD(+) site. Position 130 is a phosphoserine (Ser-130). The segment at 220-484 (GEVFLVGAGP…DPCWTGGMRD (265 aa)) is uroporphyrinogen-III C-methyltransferase. An S-adenosyl-L-methionine-binding site is contributed by Pro-229. Asp-252 functions as the Proton acceptor in the catalytic mechanism. Residue Lys-274 is the Proton donor of the active site. Residues 305-307 (GGD), Leu-310, 335-336 (SA), Met-387, and Ala-416 contribute to the S-adenosyl-L-methionine site.

In the N-terminal section; belongs to the precorrin-2 dehydrogenase / sirohydrochlorin ferrochelatase family. This sequence in the C-terminal section; belongs to the precorrin methyltransferase family.

It catalyses the reaction uroporphyrinogen III + 2 S-adenosyl-L-methionine = precorrin-2 + 2 S-adenosyl-L-homocysteine + H(+). The catalysed reaction is precorrin-2 + NAD(+) = sirohydrochlorin + NADH + 2 H(+). It carries out the reaction siroheme + 2 H(+) = sirohydrochlorin + Fe(2+). It participates in cofactor biosynthesis; adenosylcobalamin biosynthesis; precorrin-2 from uroporphyrinogen III: step 1/1. Its pathway is cofactor biosynthesis; adenosylcobalamin biosynthesis; sirohydrochlorin from precorrin-2: step 1/1. The protein operates within porphyrin-containing compound metabolism; siroheme biosynthesis; precorrin-2 from uroporphyrinogen III: step 1/1. It functions in the pathway porphyrin-containing compound metabolism; siroheme biosynthesis; siroheme from sirohydrochlorin: step 1/1. It participates in porphyrin-containing compound metabolism; siroheme biosynthesis; sirohydrochlorin from precorrin-2: step 1/1. Functionally, multifunctional enzyme that catalyzes the SAM-dependent methylations of uroporphyrinogen III at position C-2 and C-7 to form precorrin-2 via precorrin-1. Then it catalyzes the NAD-dependent ring dehydrogenation of precorrin-2 to yield sirohydrochlorin. Finally, it catalyzes the ferrochelation of sirohydrochlorin to yield siroheme. This chain is Siroheme synthase 1, found in Halorhodospira halophila (strain DSM 244 / SL1) (Ectothiorhodospira halophila (strain DSM 244 / SL1)).